A 251-amino-acid polypeptide reads, in one-letter code: tRNA pseudouridine synthase A (251 aa).

Aspartate 56 (nucleophile) is an active-site residue. Residue tyrosine 110 coordinates substrate.

Belongs to the tRNA pseudouridine synthase TruA family.

The enzyme catalyses uridine(38/39/40) in tRNA = pseudouridine(38/39/40) in tRNA. Functionally, formation of pseudouridine at positions 38, 39 and 40 in the anticodon stem and loop of transfer RNAs. This Picrophilus torridus (strain ATCC 700027 / DSM 9790 / JCM 10055 / NBRC 100828 / KAW 2/3) protein is tRNA pseudouridine synthase A.